Consider the following 212-residue polypeptide: Pyridoxine/pyridoxamine 5'-phosphate oxidase (212 aa).

Substrate-binding positions include 8-11 and Lys66; that span reads RREY. FMN is bound by residues 61–66, 76–77, Arg82, Lys83, and Gln105; these read RIVLLK and FT. Residues Tyr123, Arg127, and Ser131 each coordinate substrate. Residues 140-141 and Trp185 each bind FMN; that span reads QS. 191–193 contacts substrate; it reads RLH. Arg195 is an FMN binding site.

This sequence belongs to the pyridoxamine 5'-phosphate oxidase family. In terms of assembly, homodimer. FMN serves as cofactor.

It carries out the reaction pyridoxamine 5'-phosphate + O2 + H2O = pyridoxal 5'-phosphate + H2O2 + NH4(+). It catalyses the reaction pyridoxine 5'-phosphate + O2 = pyridoxal 5'-phosphate + H2O2. Its pathway is cofactor metabolism; pyridoxal 5'-phosphate salvage; pyridoxal 5'-phosphate from pyridoxamine 5'-phosphate: step 1/1. It functions in the pathway cofactor metabolism; pyridoxal 5'-phosphate salvage; pyridoxal 5'-phosphate from pyridoxine 5'-phosphate: step 1/1. Functionally, catalyzes the oxidation of either pyridoxine 5'-phosphate (PNP) or pyridoxamine 5'-phosphate (PMP) into pyridoxal 5'-phosphate (PLP). The polypeptide is Pyridoxine/pyridoxamine 5'-phosphate oxidase (Shewanella baltica (strain OS223)).